The chain runs to 236 residues: Large ribosomal subunit protein uL1 (236 aa).

Belongs to the universal ribosomal protein uL1 family. As to quaternary structure, part of the 50S ribosomal subunit.

In terms of biological role, binds directly to 23S rRNA. The L1 stalk is quite mobile in the ribosome, and is involved in E site tRNA release. Its function is as follows. Protein L1 is also a translational repressor protein, it controls the translation of the L11 operon by binding to its mRNA. The sequence is that of Large ribosomal subunit protein uL1 from Corynebacterium jeikeium (strain K411).